An 801-amino-acid chain; its full sequence is Phenylalanine--tRNA ligase beta subunit (801 aa).

Positions 39–153 (AEGLSKLVVG…EEAVPGDAIF (115 aa)) constitute a tRNA-binding domain. Positions 406 to 481 (TEPVEVSTSL…RIYGYDKLPT (76 aa)) constitute a B5 domain. Residues Asp-459, Asp-465, Glu-468, and Glu-469 each coordinate Mg(2+). In terms of domain architecture, FDX-ACB spans 708–801 (TKFPAMTRDI…LTEQVGAEVR (94 aa)).

The protein belongs to the phenylalanyl-tRNA synthetase beta subunit family. Type 1 subfamily. As to quaternary structure, tetramer of two alpha and two beta subunits. It depends on Mg(2+) as a cofactor.

The protein resides in the cytoplasm. The catalysed reaction is tRNA(Phe) + L-phenylalanine + ATP = L-phenylalanyl-tRNA(Phe) + AMP + diphosphate + H(+). In Streptococcus pyogenes serotype M18 (strain MGAS8232), this protein is Phenylalanine--tRNA ligase beta subunit.